Here is a 547-residue protein sequence, read N- to C-terminus: Inactive delta-guaiene synthase (547 aa).

3 residues coordinate Mg(2+): D299, D303, and D444. The short motif at 299–303 (DDTYD) is the DDXXD motif element.

It belongs to the terpene synthase family. It depends on Mg(2+) as a cofactor.

In Aquilaria crassna (Eagle wood), this protein is Inactive delta-guaiene synthase (C1).